We begin with the raw amino-acid sequence, 411 residues long: Bifunctional protein GlmU (411 aa).

The segment at Met-1 to Lys-204 is pyrophosphorylase. UTP contacts are provided by residues Leu-6 to Gly-9, Gln-74, and Gly-79. N-acetyl-alpha-D-glucosamine 1-phosphate-binding residues include Thr-80, Gly-130, Asn-142, and Asn-158. The segment at Gly-205–Leu-224 is linker. Positions Asn-225 to Asn-411 are N-acetyltransferase. The active-site Proton acceptor is the His-308. Acetyl-CoA contacts are provided by Ala-384 and Lys-401.

This sequence in the N-terminal section; belongs to the N-acetylglucosamine-1-phosphate uridyltransferase family. It in the C-terminal section; belongs to the transferase hexapeptide repeat family.

The catalysed reaction is N-acetyl-alpha-D-glucosamine 1-phosphate + UTP + H(+) = UDP-N-acetyl-alpha-D-glucosamine + diphosphate. It carries out the reaction alpha-D-glucosamine 1-phosphate + acetyl-CoA = N-acetyl-alpha-D-glucosamine 1-phosphate + CoA + H(+). It participates in nucleotide-sugar biosynthesis; UDP-N-acetyl-alpha-D-glucosamine biosynthesis; N-acetyl-alpha-D-glucosamine 1-phosphate from alpha-D-glucosamine 6-phosphate (route II): step 2/2. Its pathway is nucleotide-sugar biosynthesis; UDP-N-acetyl-alpha-D-glucosamine biosynthesis; UDP-N-acetyl-alpha-D-glucosamine from N-acetyl-alpha-D-glucosamine 1-phosphate: step 1/1. Catalyzes the last two sequential reactions in the de novo biosynthetic pathway for UDP-N-acetyl-glucosamine (UDP-GlcNAc). Responsible for the acetylation of GlcN-1-P to GlcNAc-1-P, and for the uridyl transfer from UTP to GlcNAc-1-P, to produce UDP-GlcNAc and pyrophosphate. This chain is Bifunctional protein GlmU, found in Methanococcus maripaludis (strain DSM 14266 / JCM 13030 / NBRC 101832 / S2 / LL).